We begin with the raw amino-acid sequence, 238 residues long: 1-(5-phosphoribosyl)-5-[(5-phosphoribosylamino)methylideneamino] imidazole-4-carboxamide isomerase (238 aa).

Asp8 acts as the Proton acceptor in catalysis. The active-site Proton donor is Asp127.

Belongs to the HisA/HisF family.

It localises to the cytoplasm. It carries out the reaction 1-(5-phospho-beta-D-ribosyl)-5-[(5-phospho-beta-D-ribosylamino)methylideneamino]imidazole-4-carboxamide = 5-[(5-phospho-1-deoxy-D-ribulos-1-ylimino)methylamino]-1-(5-phospho-beta-D-ribosyl)imidazole-4-carboxamide. The protein operates within amino-acid biosynthesis; L-histidine biosynthesis; L-histidine from 5-phospho-alpha-D-ribose 1-diphosphate: step 4/9. In Nitratiruptor sp. (strain SB155-2), this protein is 1-(5-phosphoribosyl)-5-[(5-phosphoribosylamino)methylideneamino] imidazole-4-carboxamide isomerase.